The following is a 287-amino-acid chain: 2-dehydro-3-deoxyphosphooctonate aldolase (287 aa).

The protein belongs to the KdsA family.

It is found in the cytoplasm. The enzyme catalyses D-arabinose 5-phosphate + phosphoenolpyruvate + H2O = 3-deoxy-alpha-D-manno-2-octulosonate-8-phosphate + phosphate. It functions in the pathway carbohydrate biosynthesis; 3-deoxy-D-manno-octulosonate biosynthesis; 3-deoxy-D-manno-octulosonate from D-ribulose 5-phosphate: step 2/3. The protein operates within bacterial outer membrane biogenesis; lipopolysaccharide biosynthesis. In Leptospira interrogans serogroup Icterohaemorrhagiae serovar copenhageni (strain Fiocruz L1-130), this protein is 2-dehydro-3-deoxyphosphooctonate aldolase.